Consider the following 156-residue polypeptide: Small ribosomal subunit protein uS7c (156 aa).

It belongs to the universal ribosomal protein uS7 family. As to quaternary structure, part of the 30S ribosomal subunit.

It localises to the plastid. It is found in the chloroplast. Its function is as follows. One of the primary rRNA binding proteins, it binds directly to 16S rRNA where it nucleates assembly of the head domain of the 30S subunit. This chain is Small ribosomal subunit protein uS7c (rps7), found in Guillardia theta (Cryptophyte).